Reading from the N-terminus, the 315-residue chain is Putative glycosyltransferase ORF315 (315 aa).

This sequence belongs to the glycosyltransferase group 1 family. Glycosyltransferase 4 subfamily.

This chain is Putative glycosyltransferase ORF315, found in Acidianus convivator (ABV).